Consider the following 141-residue polypeptide: S-adenosylmethionine decarboxylase proenzyme (141 aa).

The Schiff-base intermediate with substrate; via pyruvic acid role is filled by S63. S63 bears the Pyruvic acid (Ser); by autocatalysis mark. H68 (proton acceptor; for processing activity) is an active-site residue. C83 (proton donor; for catalytic activity) is an active-site residue.

This sequence belongs to the prokaryotic AdoMetDC family. Type 1 subfamily. As to quaternary structure, heterotetramer of two alpha and two beta chains arranged as a dimer of alpha/beta heterodimers. Pyruvate is required as a cofactor. In terms of processing, is synthesized initially as an inactive proenzyme. Formation of the active enzyme involves a self-maturation process in which the active site pyruvoyl group is generated from an internal serine residue via an autocatalytic post-translational modification. Two non-identical subunits are generated from the proenzyme in this reaction, and the pyruvate is formed at the N-terminus of the alpha chain, which is derived from the carboxyl end of the proenzyme. The post-translation cleavage follows an unusual pathway, termed non-hydrolytic serinolysis, in which the side chain hydroxyl group of the serine supplies its oxygen atom to form the C-terminus of the beta chain, while the remainder of the serine residue undergoes an oxidative deamination to produce ammonia and the pyruvoyl group blocking the N-terminus of the alpha chain.

It carries out the reaction S-adenosyl-L-methionine + H(+) = S-adenosyl 3-(methylsulfanyl)propylamine + CO2. It participates in amine and polyamine biosynthesis; S-adenosylmethioninamine biosynthesis; S-adenosylmethioninamine from S-adenosyl-L-methionine: step 1/1. Catalyzes the decarboxylation of S-adenosylmethionine to S-adenosylmethioninamine (dcAdoMet), the propylamine donor required for the synthesis of the polyamines spermine and spermidine from the diamine putrescine. This Thermococcus onnurineus (strain NA1) protein is S-adenosylmethionine decarboxylase proenzyme.